Here is a 78-residue protein sequence, read N- to C-terminus: uncharacterized protein (78 aa).

Residues Met-1–Ala-45 form the signal peptide.

The protein to E.coli YkfL.

This is an uncharacterized protein from Escherichia coli (strain K12).